The following is a 255-amino-acid chain: Hydroxyacylglutathione hydrolase (255 aa).

The Zn(2+) site is built by His56, His58, Asp60, His61, His114, Asp133, and His171.

It belongs to the metallo-beta-lactamase superfamily. Glyoxalase II family. In terms of assembly, monomer. It depends on Zn(2+) as a cofactor.

It catalyses the reaction an S-(2-hydroxyacyl)glutathione + H2O = a 2-hydroxy carboxylate + glutathione + H(+). It functions in the pathway secondary metabolite metabolism; methylglyoxal degradation; (R)-lactate from methylglyoxal: step 2/2. Thiolesterase that catalyzes the hydrolysis of S-D-lactoyl-glutathione to form glutathione and D-lactic acid. The protein is Hydroxyacylglutathione hydrolase of Rhodopseudomonas palustris (strain BisB18).